The chain runs to 148 residues: MPKGERLFMASLDQIIDDFVFLDDWEDRYRYVIELGKALPELAEEKRTPENKVMGCASQVWLVTHTSGDPENPIMSFEGDSDAHIVRGLVAIVLATYSGKPASEIAALDAFEIFSKIGLVENLSSQRSNGLRSMVKRIREEAKVRAAA.

This sequence belongs to the SufE family.

This is an uncharacterized protein from Rhizobium etli (strain ATCC 51251 / DSM 11541 / JCM 21823 / NBRC 15573 / CFN 42).